The following is a 921-amino-acid chain: MAAATAAAAPQQLSDEELFSQLRRYGLSPGPVTESTRPVYLKKLKKLREEEQQQQQQQQQQQHRAGGRGNKTRNSNNNNTATAMGGRPGSGDLAYLRSPAGLGRLSASAAESPVAGGSGGAAAVPAAGSKVLLGFSSDESDVEASPREQAGGGGGGGARRDRAALQYRGLRAPPAPPAAGEVTGGHPGERRKPHSWWGARRPAGPEPQPPAAGSDGAAEDADEELADGEDRDPEAEEPLWASRAVNGSRLLPYSSCREHYSDSEEEEEEGEEDGDVAPARQVLKDDSLARHRPRRSHSKPFSALTAKSGGSRQETSVQGGGALAMNDRAAAAGSLDRSRNLEEAAAEPGGGGGGGCGCDPVDSIPRYRAGAKKLAPLLSPPSPDGDSTLESPTGPLLKTNNHIGGGAFGVDSPGLYANSLPPGATAAAAPGTLRINHANHTGSNHTYLKTAYGKPKLCEPEEELLQQFKREEVSPTGSFSAHYLSMFLLTAACLFFLILGLTYLGMRGTGVPEDGGLIKNPFDETFGKIQESEKNLLMSTLYKLHDRLAQIAGDHECGSSSQRMLSVQEAAAYLKNLGPEYEDVFNTSLLWIFKNGKDVGIRCVGYGPEEDLTNITDVQFLQSTRPQMPFWCRFRRAFITVTHRLLLLCLGVVLVCVALRYMRYRWTKEEEETRQMYDMVVKIIDVLRSHNEACQETKDLQPYMPLPHVRDSLIQPQDRKKMKKVWDRAVDFLAANESRVRTETRRVGGADFLVWRWIQPSASCDKTLVIPSKVWQGQAFHLDRRNSPPNSLTPCLKIRNMFDPVMEIGDHWHLAIQEAILEKCSDNDGIVHIAVDRNSREGCVYVKCLSPEYAGKAFKALHGSWFDGKLVTVKYLRLDRYHHRFPQALTCNTPLKPANKHMNSLSHLRLRTGLANSQGSS.

An LEM domain is found at 7–51 (AAAPQQLSDEELFSQLRRYGLSPGPVTESTRPVYLKKLKKLREEE). Serine 28 carries the phosphoserine modification. Disordered stretches follow at residues 47–97 (LREE…AYLR), 136–357 (SSDE…GGCG), and 374–395 (LAPL…PTGP). 2 stretches are compositionally biased toward low complexity: residues 53–62 (QQQQQQQQQQ) and 72–85 (TRNS…TAMG). Phosphoserine occurs at positions 136, 137, and 140. Residues 217 to 237 (AAEDADEELADGEDRDPEAEE) show a composition bias toward acidic residues. A phosphoserine mark is found at serine 261, serine 263, and serine 287. Residues 263 to 275 (SEEEEEEGEEDGD) are compositionally biased toward acidic residues. Over residues 308–317 (SGGSRQETSV) the composition is skewed to polar residues. The span at 348-357 (PGGGGGGGCG) shows a compositional bias: gly residues. A Phosphoserine modification is found at serine 412. A run of 2 helical transmembrane segments spans residues 486-506 (MFLL…YLGM) and 637-657 (AFIT…LVCV). The interval 709-921 (VRDSLIQPQD…TGLANSQGSS (213 aa)) is interaction with SMAD1, SMAD2, SMAD3 and SMAD5. The DNA-binding element occupies 717–736 (QDRKKMKKVWDRAVDFLAAN). Serine 787 carries the post-translational modification Phosphoserine. Threonine 893 bears the Phosphothreonine mark. Serine 921 is subject to Phosphoserine.

In terms of assembly, interacts with SMAD1, SMAD2, SMAD3 and SMAD5. Binds to both phosphorylated and unphosphorylated R-SMADS.

Its subcellular location is the nucleus inner membrane. Functionally, can function as a specific repressor of TGF-beta, activin, and BMP signaling through its interaction with the R-SMAD proteins. Antagonizes TGF-beta-induced cell proliferation arrest. The polypeptide is Inner nuclear membrane protein Man1 (Lemd3) (Mus musculus (Mouse)).